The primary structure comprises 777 residues: Homoaconitase, mitochondrial (777 aa).

Residues 1 to 35 (MFKRTGSLLLRCRASRVPVIGRPLISLSTSSTSLS) constitute a mitochondrion transit peptide. Residues 47–74 (LRRYTEASSSTTQTSPSSSSWPAPDAAP) are disordered. Over residues 52–74 (EASSSTTQTSPSSSSWPAPDAAP) the composition is skewed to low complexity. 3 residues coordinate [4Fe-4S] cluster: Cys398, Cys466, and Cys469.

This sequence belongs to the aconitase/IPM isomerase family. [4Fe-4S] cluster serves as cofactor.

The protein localises to the mitochondrion. It catalyses the reaction (2R,3S)-homoisocitrate = cis-homoaconitate + H2O. The protein operates within amino-acid biosynthesis; L-lysine biosynthesis via AAA pathway; L-alpha-aminoadipate from 2-oxoglutarate: step 3/5. Catalyzes the reversible hydration of cis-homoaconitate to (2R,3S)-homoisocitrate, a step in the alpha-aminoadipate pathway for lysine biosynthesis. This is Homoaconitase, mitochondrial (lys4) from Aspergillus fumigatus (strain ATCC MYA-4609 / CBS 101355 / FGSC A1100 / Af293) (Neosartorya fumigata).